We begin with the raw amino-acid sequence, 258 residues long: Ubiquinone/menaquinone biosynthesis C-methyltransferase UbiE (258 aa).

Residues 1-20 (MSESRTSADGGMETSYGFRE) form a disordered region. S-adenosyl-L-methionine-binding positions include T81, D102, and 130 to 131 (NA).

This sequence belongs to the class I-like SAM-binding methyltransferase superfamily. MenG/UbiE family.

The catalysed reaction is a 2-demethylmenaquinol + S-adenosyl-L-methionine = a menaquinol + S-adenosyl-L-homocysteine + H(+). The enzyme catalyses a 2-methoxy-6-(all-trans-polyprenyl)benzene-1,4-diol + S-adenosyl-L-methionine = a 5-methoxy-2-methyl-3-(all-trans-polyprenyl)benzene-1,4-diol + S-adenosyl-L-homocysteine + H(+). It participates in quinol/quinone metabolism; menaquinone biosynthesis; menaquinol from 1,4-dihydroxy-2-naphthoate: step 2/2. Its pathway is cofactor biosynthesis; ubiquinone biosynthesis. Methyltransferase required for the conversion of demethylmenaquinol (DMKH2) to menaquinol (MKH2) and the conversion of 2-polyprenyl-6-methoxy-1,4-benzoquinol (DDMQH2) to 2-polyprenyl-3-methyl-6-methoxy-1,4-benzoquinol (DMQH2). This is Ubiquinone/menaquinone biosynthesis C-methyltransferase UbiE from Rhizobium etli (strain CIAT 652).